The primary structure comprises 252 residues: Phosphoglycolate phosphatase (252 aa).

The Nucleophile role is filled by aspartate 13. Residues aspartate 13, aspartate 15, and aspartate 192 each contribute to the Mg(2+) site.

Belongs to the HAD-like hydrolase superfamily. CbbY/CbbZ/Gph/YieH family. As to quaternary structure, monomer. It depends on Mg(2+) as a cofactor. Chloride serves as cofactor.

It carries out the reaction 2-phosphoglycolate + H2O = glycolate + phosphate. The protein operates within organic acid metabolism; glycolate biosynthesis; glycolate from 2-phosphoglycolate: step 1/1. In terms of biological role, specifically catalyzes the dephosphorylation of 2-phosphoglycolate. Is involved in the dissimilation of the intracellular 2-phosphoglycolate formed during the DNA repair of 3'-phosphoglycolate ends, a major class of DNA lesions induced by oxidative stress. This Shigella dysenteriae serotype 1 (strain Sd197) protein is Phosphoglycolate phosphatase.